The following is a 708-amino-acid chain: Fatty acid oxidation complex subunit alpha (708 aa).

The tract at residues methionine 1 to proline 191 is enoyl-CoA hydratase. Residues alanine 311–proline 708 are 3-hydroxyacyl-CoA dehydrogenase.

In the N-terminal section; belongs to the enoyl-CoA hydratase/isomerase family. This sequence in the central section; belongs to the 3-hydroxyacyl-CoA dehydrogenase family. As to quaternary structure, heterotetramer of two alpha chains (FadJ) and two beta chains (FadI).

The protein localises to the cytoplasm. The enzyme catalyses a (3S)-3-hydroxyacyl-CoA = a (2E)-enoyl-CoA + H2O. The catalysed reaction is a 4-saturated-(3S)-3-hydroxyacyl-CoA = a (3E)-enoyl-CoA + H2O. It catalyses the reaction a (3S)-3-hydroxyacyl-CoA + NAD(+) = a 3-oxoacyl-CoA + NADH + H(+). It carries out the reaction (3S)-3-hydroxybutanoyl-CoA = (3R)-3-hydroxybutanoyl-CoA. The protein operates within lipid metabolism; fatty acid beta-oxidation. Functionally, catalyzes the formation of a hydroxyacyl-CoA by addition of water on enoyl-CoA. Also exhibits 3-hydroxyacyl-CoA epimerase and 3-hydroxyacyl-CoA dehydrogenase activities. This Vibrio cholerae serotype O1 (strain ATCC 39315 / El Tor Inaba N16961) protein is Fatty acid oxidation complex subunit alpha.